We begin with the raw amino-acid sequence, 438 residues long: 3-phosphoshikimate 1-carboxyvinyltransferase (438 aa).

The 3-phosphoshikimate site is built by lysine 25, serine 26, and arginine 30. Lysine 25 provides a ligand contact to phosphoenolpyruvate. Residues glycine 99 and arginine 128 each contribute to the phosphoenolpyruvate site. 3-phosphoshikimate is bound by residues serine 173, glutamine 175, aspartate 325, and lysine 352. Glutamine 175 contacts phosphoenolpyruvate. The Proton acceptor role is filled by aspartate 325. Phosphoenolpyruvate is bound by residues arginine 356 and arginine 398.

Belongs to the EPSP synthase family. In terms of assembly, monomer.

It is found in the cytoplasm. The enzyme catalyses 3-phosphoshikimate + phosphoenolpyruvate = 5-O-(1-carboxyvinyl)-3-phosphoshikimate + phosphate. It functions in the pathway metabolic intermediate biosynthesis; chorismate biosynthesis; chorismate from D-erythrose 4-phosphate and phosphoenolpyruvate: step 6/7. Functionally, catalyzes the transfer of the enolpyruvyl moiety of phosphoenolpyruvate (PEP) to the 5-hydroxyl of shikimate-3-phosphate (S3P) to produce enolpyruvyl shikimate-3-phosphate and inorganic phosphate. The chain is 3-phosphoshikimate 1-carboxyvinyltransferase from Prochlorococcus marinus subsp. pastoris (strain CCMP1986 / NIES-2087 / MED4).